Here is a 150-residue protein sequence, read N- to C-terminus: Galectin-1 (150 aa).

Positions 9–141 (NQIKLQDDFK…FSSPVTVDIH (133 aa)) constitute a Galectin domain. A carbohydrate-binding residues include His51, Arg55, Asn64, and Glu75.

Homotetramer. Oligomerization is required for carbohydrate binding. In terms of tissue distribution, most abundant in fruiting bodies. Very low levels of expression in asexual vegetative mycelia.

The protein resides in the secreted. It is found in the extracellular space. The protein localises to the extracellular matrix. It localises to the cell wall. Its subcellular location is the endomembrane system. Functionally, binds lactose. May play a role in fruiting body formation. This is Galectin-1 (Cgl1) from Coprinopsis cinerea (strain Okayama-7 / 130 / ATCC MYA-4618 / FGSC 9003) (Inky cap fungus).